Consider the following 320-residue polypeptide: MRSAQVYRWQIPMDAGVVLRDRRLKTRDGLYVCLREGEREGWGEISPLPGFSQESWEDAQSVLLAWVNNWLAGDCELPQMPSVAFGVSCALAELADTLPQAANYRAAPLCNGDPDDLILKLADMPGEKVAKVKVGLYEAVRDGMVVNLLLEAIPDLHLRLDANRAWTPLKGQQFAKYVNPDYRHRIAFLEEPCKTRDDSRAFARETGIAIAWDESLREPDFAFVAEEGVRAVVIKPTLTGSLDKVREQVQAAHALGLTAVISSSIESSLGLTQLARIAAWLTPDTIPGLDTLDLMQAQQVRRWPGSPLPLVDVDALERLL.

Lys133 serves as the catalytic Proton donor. Asp161, Glu190, and Asp213 together coordinate Mg(2+). Lys235 functions as the Proton acceptor in the catalytic mechanism.

This sequence belongs to the mandelate racemase/muconate lactonizing enzyme family. MenC type 1 subfamily. A divalent metal cation is required as a cofactor.

The enzyme catalyses (1R,6R)-6-hydroxy-2-succinyl-cyclohexa-2,4-diene-1-carboxylate = 2-succinylbenzoate + H2O. It functions in the pathway quinol/quinone metabolism; 1,4-dihydroxy-2-naphthoate biosynthesis; 1,4-dihydroxy-2-naphthoate from chorismate: step 4/7. It participates in quinol/quinone metabolism; menaquinone biosynthesis. Its function is as follows. Converts 2-succinyl-6-hydroxy-2,4-cyclohexadiene-1-carboxylate (SHCHC) to 2-succinylbenzoate (OSB). This chain is o-succinylbenzoate synthase, found in Escherichia coli O81 (strain ED1a).